The following is a 114-amino-acid chain: ATP synthase epsilon chain (114 aa).

The protein belongs to the ATPase epsilon chain family. F-type ATPases have 2 components, CF(1) - the catalytic core - and CF(0) - the membrane proton channel. CF(1) has five subunits: alpha(3), beta(3), gamma(1), delta(1), epsilon(1). CF(0) has three main subunits: a, b and c.

The protein resides in the cell membrane. Produces ATP from ADP in the presence of a proton gradient across the membrane. The chain is ATP synthase epsilon chain from Wolbachia pipientis wMel.